Here is a 596-residue protein sequence, read N- to C-terminus: uncharacterized protein (596 aa).

The Helicase ATP-binding domain maps to 44-203; it reads KYLASQPRDF…PFVTYALDAD (160 aa). Residues 285–432 enclose the Helicase C-terminal domain; the sequence is RLRQLRTHVP…PHRESTDNPL (148 aa). Disordered regions lie at residues 420–444 and 506–533; these read LGKP…QTEQ and EQLQ…SVHG. A compositionally biased stretch (polar residues) spans 510–523; the sequence is KRTAAQQASSTPDR.

It to M.tuberculosis Rv2917.

This is an uncharacterized protein from Mycobacterium leprae (strain TN).